Here is a 613-residue protein sequence, read N- to C-terminus: MIQALLVIICLAVFPHQGSSIILESGNVNDYEVVYPQKVPALLKGGVQNPQPETKYEDTMRYEFQVNGEPVVLHLERNKGLFSEDYTETHYAPDGREITTSPPVQDHCYYHGYIQNEADSSAVISACDGLKGHFEHQGETYFIEPLKISNSEAHAIYKDENVENEDETPEICGVTETTWESDESIEKTSQLTNTPEQDRYLQAKKYIEFYVVVDNIMYRHYKRDQPVIKRKVYEMINTMNMIYRRLNFHIALIGLEIWSNINEINVQSDVRATLNLFGEWREKKLLPRKRNDNAQLLTGIDFNGTPVGLAYIGSICNPKTSAAVVQDYSSRTRMVAITMAHEMGHNLGMNHDRGFCTCGFNKCVMSTRRTKPAYQFSSCSVREHQRYLLRDRPQCILNKPLSTDIVSPPICGNYFVEVGEECDCGSPADCQSACCNATTCKLQHEAQCDSEECCEKCKFKGARAECRAAKDDCDLPELCTGQSAECPTDVFQRNGLPCQNNQGYCYNGKCPIMTNQCIALRGPGVKVSRDSCFTLNQRTRGCGLCRMEYGRKIPCAAKDVKCGRLFCKRRNSMICNCSISPRDPNYGMVEPGTKCGDGMVCSNRQCVDVKTAY.

An N-terminal signal peptide occupies residues 1–20 (MIQALLVIICLAVFPHQGSS). The propeptide occupies 21–191 (IILESGNVND…DESIEKTSQL (171 aa)). One can recognise a Peptidase M12B domain in the interval 205 to 400 (KYIEFYVVVD…DRPQCILNKP (196 aa)). Ca(2+) contacts are provided by Glu208 and Asp292. 2 cysteine pairs are disulfide-bonded: Cys316–Cys395 and Cys356–Cys379. His341, His345, and His351 together coordinate Zn(2+). Ca(2+) is bound by residues Cys395, Asn398, Ile410, Asn413, Phe415, Glu417, Glu420, and Asp423. The region spanning 408-494 (PPICGNYFVE…ECPTDVFQRN (87 aa)) is the Disintegrin domain. Cystine bridges form between Cys411-Cys440, Cys422-Cys435, Cys424-Cys430, Cys434-Cys457, Cys448-Cys454, Cys453-Cys479, Cys466-Cys486, Cys473-Cys505, Cys498-Cys510, Cys517-Cys567, Cys532-Cys575, Cys542-Cys577, Cys545-Cys555, Cys562-Cys601, and Cys595-Cys606. An N-linked (GlcNAc...) asparagine glycan is attached at Asn436. A D/ECD-tripeptide motif is present at residues 472–474 (DCD). Ca(2+)-binding residues include Asp474, Leu475, Glu477, Asp489, and Val490. Residues 560–574 (VKCGRLFCKRRNSMI) are hypervariable region that may play important roles toward cell migration.

It belongs to the venom metalloproteinase (M12B) family. P-III subfamily. P-IIIa sub-subfamily. In terms of assembly, monomer. The cofactor is Zn(2+). Expressed by the venom gland.

It is found in the secreted. In terms of biological role, snake venom zinc metalloproteinase that seems to inhibit cell migration. This activity is dominated by the local structure of the hyper-variable region. This Naja atra (Chinese cobra) protein is Zinc metalloproteinase-disintegrin-like atragin.